The chain runs to 324 residues: UDP-N-acetylenolpyruvoylglucosamine reductase (324 aa).

In terms of domain architecture, FAD-binding PCMH-type spans 36–203 (FRAGGLAELM…THAIFEGFPE (168 aa)). Arg183 is a catalytic residue. The active-site Proton donor is Ser232. Glu302 is a catalytic residue.

It belongs to the MurB family. The cofactor is FAD.

The protein resides in the cytoplasm. It catalyses the reaction UDP-N-acetyl-alpha-D-muramate + NADP(+) = UDP-N-acetyl-3-O-(1-carboxyvinyl)-alpha-D-glucosamine + NADPH + H(+). Its pathway is cell wall biogenesis; peptidoglycan biosynthesis. Its function is as follows. Cell wall formation. In Sinorhizobium fredii (strain NBRC 101917 / NGR234), this protein is UDP-N-acetylenolpyruvoylglucosamine reductase.